We begin with the raw amino-acid sequence, 122 residues long: Large ribosomal subunit protein uL14 (122 aa).

The protein belongs to the universal ribosomal protein uL14 family. As to quaternary structure, part of the 50S ribosomal subunit. Forms a cluster with proteins L3 and L19. In the 70S ribosome, L14 and L19 interact and together make contacts with the 16S rRNA in bridges B5 and B8.

Its function is as follows. Binds to 23S rRNA. Forms part of two intersubunit bridges in the 70S ribosome. This Alkaliphilus oremlandii (strain OhILAs) (Clostridium oremlandii (strain OhILAs)) protein is Large ribosomal subunit protein uL14.